The following is a 348-amino-acid chain: Succinylglutamate desuccinylase (348 aa).

Zn(2+) contacts are provided by His67, Glu70, and His164. Glu228 is a catalytic residue.

The protein belongs to the AspA/AstE family. Succinylglutamate desuccinylase subfamily. The cofactor is Zn(2+).

The enzyme catalyses N-succinyl-L-glutamate + H2O = L-glutamate + succinate. It participates in amino-acid degradation; L-arginine degradation via AST pathway; L-glutamate and succinate from L-arginine: step 5/5. Transforms N(2)-succinylglutamate into succinate and glutamate. The protein is Succinylglutamate desuccinylase of Shewanella denitrificans (strain OS217 / ATCC BAA-1090 / DSM 15013).